Here is a 259-residue protein sequence, read N- to C-terminus: DNA-directed RNA polymerase subunit Rpo3 (259 aa).

The protein belongs to the archaeal Rpo3/eukaryotic RPB3 RNA polymerase subunit family. In terms of assembly, part of the RNA polymerase complex.

It localises to the cytoplasm. The catalysed reaction is RNA(n) + a ribonucleoside 5'-triphosphate = RNA(n+1) + diphosphate. Its function is as follows. DNA-dependent RNA polymerase (RNAP) catalyzes the transcription of DNA into RNA using the four ribonucleoside triphosphates as substrates. In Pyrococcus horikoshii (strain ATCC 700860 / DSM 12428 / JCM 9974 / NBRC 100139 / OT-3), this protein is DNA-directed RNA polymerase subunit Rpo3.